The following is a 1025-amino-acid chain: Multidrug resistance protein MdtC (1025 aa).

Helical transmembrane passes span 3–23 (FFAL…AITL), 333–353 (EVEQ…FLFL), 360–380 (IIPA…MYLC), 387–407 (LSLM…IVVL), 431–451 (VGFT…PLLL), 463–483 (FAVT…TLTP), 528–548 (LVGV…ISIP), 853–873 (VILI…LYES), 875–895 (VHPL…LLAL), 897–917 (LFNA…IGIV), 953–973 (PIMM…LSGG), and 984–1004 (ITIV…TPVV).

The protein belongs to the resistance-nodulation-cell division (RND) (TC 2.A.6) family. MdtC subfamily. As to quaternary structure, part of a tripartite efflux system composed of MdtA, MdtB and MdtC. MdtC forms a heteromultimer with MdtB.

The protein localises to the cell inner membrane. Its function is as follows. The MdtABC tripartite complex confers resistance against novobiocin and deoxycholate. In Escherichia coli O127:H6 (strain E2348/69 / EPEC), this protein is Multidrug resistance protein MdtC.